A 232-amino-acid polypeptide reads, in one-letter code: MSNVDHAEIAKFEALAHRWWDRESEFKPLHDINPLRVNWIDERVSLAGKKVLDVGCGGGILSEAMAQRGATVTGIDMGEAPLAVAQLHQLESGVDVEYRQITAEALAEEMPEQFDVVTCLEMLEHVPDPSSVIRACYRMVKPGGQVFFSTINRNPKAYLLAIIGAEYILKMLPRGTHDFKKFIRPSELGAWSRVAGLEVKDIIGLTYNPLTKHYKLSNDVDVNYMIQTLREE.

S-adenosyl-L-methionine is bound by residues Arg-36, Gly-55, Asp-76, and Leu-120.

This sequence belongs to the methyltransferase superfamily. UbiG/COQ3 family.

It catalyses the reaction a 3-demethylubiquinol + S-adenosyl-L-methionine = a ubiquinol + S-adenosyl-L-homocysteine + H(+). The catalysed reaction is a 3-(all-trans-polyprenyl)benzene-1,2-diol + S-adenosyl-L-methionine = a 2-methoxy-6-(all-trans-polyprenyl)phenol + S-adenosyl-L-homocysteine + H(+). The protein operates within cofactor biosynthesis; ubiquinone biosynthesis. O-methyltransferase that catalyzes the 2 O-methylation steps in the ubiquinone biosynthetic pathway. The chain is Ubiquinone biosynthesis O-methyltransferase from Pseudomonas entomophila (strain L48).